Here is a 439-residue protein sequence, read N- to C-terminus: Xylose isomerase (439 aa).

Residues His-101 and Asp-104 contribute to the active site. Mg(2+) contacts are provided by Glu-232, Glu-268, His-271, Asp-296, Asp-307, Asp-309, and Asp-339.

It belongs to the xylose isomerase family. In terms of assembly, homotetramer. The cofactor is Mg(2+).

It localises to the cytoplasm. It catalyses the reaction alpha-D-xylose = alpha-D-xylulofuranose. This Marinomonas sp. (strain MWYL1) protein is Xylose isomerase.